We begin with the raw amino-acid sequence, 338 residues long: UDP-glucose 4-epimerase (338 aa).

Residues 11-12 (YI), 31-36 (DNLCNS), 58-59 (DI), 80-84 (FAGLK), Asn-99, Ser-124, Tyr-149, Lys-153, and Phe-178 each bind NAD(+). Ser-124 and Tyr-149 together coordinate substrate. Tyr-149 serves as the catalytic Proton acceptor. Substrate is bound by residues Asn-179, 199-200 (NL), 216-218 (SVF), Arg-231, and 292-295 (RPGD).

This sequence belongs to the NAD(P)-dependent epimerase/dehydratase family. In terms of assembly, homodimer. The cofactor is NAD(+).

It catalyses the reaction UDP-alpha-D-glucose = UDP-alpha-D-galactose. Its pathway is carbohydrate metabolism; galactose metabolism. In terms of biological role, involved in the metabolism of galactose. Catalyzes the conversion of UDP-galactose (UDP-Gal) to UDP-glucose (UDP-Glc) through a mechanism involving the transient reduction of NAD. This chain is UDP-glucose 4-epimerase (galE), found in Pasteurella multocida (strain Pm70).